The sequence spans 162 residues: SsrA-binding protein (162 aa).

The segment covering 137 to 154 (HDKREDTKAREWDREKAR) has biased composition (basic and acidic residues). The segment at 137 to 162 (HDKREDTKAREWDREKARIMKNKHRG) is disordered.

Belongs to the SmpB family.

It localises to the cytoplasm. In terms of biological role, required for rescue of stalled ribosomes mediated by trans-translation. Binds to transfer-messenger RNA (tmRNA), required for stable association of tmRNA with ribosomes. tmRNA and SmpB together mimic tRNA shape, replacing the anticodon stem-loop with SmpB. tmRNA is encoded by the ssrA gene; the 2 termini fold to resemble tRNA(Ala) and it encodes a 'tag peptide', a short internal open reading frame. During trans-translation Ala-aminoacylated tmRNA acts like a tRNA, entering the A-site of stalled ribosomes, displacing the stalled mRNA. The ribosome then switches to translate the ORF on the tmRNA; the nascent peptide is terminated with the 'tag peptide' encoded by the tmRNA and targeted for degradation. The ribosome is freed to recommence translation, which seems to be the essential function of trans-translation. The protein is SsrA-binding protein of Aeromonas hydrophila subsp. hydrophila (strain ATCC 7966 / DSM 30187 / BCRC 13018 / CCUG 14551 / JCM 1027 / KCTC 2358 / NCIMB 9240 / NCTC 8049).